Here is a 333-residue protein sequence, read N- to C-terminus: Phosphate acyltransferase (333 aa).

It belongs to the PlsX family. Homodimer. Probably interacts with PlsY.

Its subcellular location is the cytoplasm. The catalysed reaction is a fatty acyl-[ACP] + phosphate = an acyl phosphate + holo-[ACP]. It functions in the pathway lipid metabolism; phospholipid metabolism. Its function is as follows. Catalyzes the reversible formation of acyl-phosphate (acyl-PO(4)) from acyl-[acyl-carrier-protein] (acyl-ACP). This enzyme utilizes acyl-ACP as fatty acyl donor, but not acyl-CoA. This chain is Phosphate acyltransferase, found in Aliarcobacter butzleri (strain RM4018) (Arcobacter butzleri).